The chain runs to 260 residues: Manganese transport system ATP-binding protein MntA (260 aa).

In terms of domain architecture, ABC transporter spans 10–245 (ISVDGVSVTY…NLELTFGGLP (236 aa)). Residue 43 to 50 (GPNGSGKS) participates in ATP binding.

Belongs to the ABC transporter superfamily.

Its function is as follows. Part of an ATP-driven transport system for manganese. The polypeptide is Manganese transport system ATP-binding protein MntA (mntA) (Synechocystis sp. (strain ATCC 27184 / PCC 6803 / Kazusa)).